The sequence spans 179 residues: Large ribosomal subunit protein bL19 (179 aa).

Belongs to the bacterial ribosomal protein bL19 family.

Its function is as follows. This protein is located at the 30S-50S ribosomal subunit interface and may play a role in the structure and function of the aminoacyl-tRNA binding site. This is Large ribosomal subunit protein bL19 from Rhizobium johnstonii (strain DSM 114642 / LMG 32736 / 3841) (Rhizobium leguminosarum bv. viciae).